The following is a 372-amino-acid chain: Queuine tRNA-ribosyltransferase (372 aa).

The Proton acceptor role is filled by Asp92. Substrate-binding positions include 92–96, Asp146, Gln188, and Gly215; that span reads DSGGF. Residues 246-252 are RNA binding; the sequence is GIGTLRE. The active-site Nucleophile is the Asp265. Positions 270–274 are RNA binding; important for wobble base 34 recognition; that stretch reads TRLGR. The Zn(2+) site is built by Cys303, Cys305, Cys308, and His334.

Belongs to the queuine tRNA-ribosyltransferase family. In terms of assembly, homodimer. Within each dimer, one monomer is responsible for RNA recognition and catalysis, while the other monomer binds to the replacement base PreQ1. The cofactor is Zn(2+).

The enzyme catalyses 7-aminomethyl-7-carbaguanine + guanosine(34) in tRNA = 7-aminomethyl-7-carbaguanosine(34) in tRNA + guanine. It functions in the pathway tRNA modification; tRNA-queuosine biosynthesis. Catalyzes the base-exchange of a guanine (G) residue with the queuine precursor 7-aminomethyl-7-deazaguanine (PreQ1) at position 34 (anticodon wobble position) in tRNAs with GU(N) anticodons (tRNA-Asp, -Asn, -His and -Tyr). Catalysis occurs through a double-displacement mechanism. The nucleophile active site attacks the C1' of nucleotide 34 to detach the guanine base from the RNA, forming a covalent enzyme-RNA intermediate. The proton acceptor active site deprotonates the incoming PreQ1, allowing a nucleophilic attack on the C1' of the ribose to form the product. After dissociation, two additional enzymatic reactions on the tRNA convert PreQ1 to queuine (Q), resulting in the hypermodified nucleoside queuosine (7-(((4,5-cis-dihydroxy-2-cyclopenten-1-yl)amino)methyl)-7-deazaguanosine). The chain is Queuine tRNA-ribosyltransferase from Synechococcus sp. (strain CC9902).